The chain runs to 279 residues: Dehydrogenase/reductase SDR family member 4 (279 aa).

37-61 (LVTASTDGIGLAIARRLAEDGAHVV) contributes to the NADP(+) binding site. Residue K93 is modified to N6-acetyllysine; alternate. Position 93 is an N6-succinyllysine; alternate (K93). Residue K106 is modified to N6-acetyllysine. S170 is a substrate binding site. The active-site Proton acceptor is the Y183. K187 is an NADP(+) binding site. An N6-acetyllysine; alternate modification is found at K217. At K217 the chain carries N6-succinyllysine; alternate. The residue at position 221 (S221) is a Phosphoserine. An N6-succinyllysine mark is found at K228 and K235. The Peroxisomal targeting signal signature appears at 277-279 (SRL).

Belongs to the short-chain dehydrogenases/reductases (SDR) family. In terms of assembly, homotetramer.

It localises to the peroxisome. The enzyme catalyses a secondary alcohol + NADP(+) = a ketone + NADPH + H(+). It carries out the reaction 3alpha-hydroxy-5beta-pregnan-20-one + NADP(+) = 5beta-pregnan-3,20-dione + NADPH + H(+). It catalyses the reaction 5beta-dihydrotestosterone + NADPH + H(+) = 5beta-androstane-3alpha,17beta-diol + NADP(+). The catalysed reaction is all-trans-retinol + NADP(+) = all-trans-retinal + NADPH + H(+). The enzyme catalyses isatin + NADPH + H(+) = 3-hydroxyindolin-2-one + NADP(+). In terms of biological role, NADPH-dependent oxidoreductase which catalyzes the reduction of a variety of compounds bearing carbonyl groups including ketosteroids, alpha-dicarbonyl compounds, aldehydes, aromatic ketones and quinones. Reduces all-trans-retinal and 9-cis retinal. Reduces 3-ketosteroids and benzil into 3alpha-hydroxysteroids and S-benzoin, respectively, in contrast to the stereoselectivity of primates DHRS4s which produce 3beta-hydroxysteroids and R-benzoin. In the reverse reaction, catalyzes the NADP-dependent oxidation of 3alpha-hydroxysteroids and alcohol, but with much lower efficiency. Involved in the metabolism of 3alpha-hydroxysteroids, retinoid, isatin and xenobiotic carbonyl compounds. This chain is Dehydrogenase/reductase SDR family member 4 (Dhrs4), found in Rattus norvegicus (Rat).